We begin with the raw amino-acid sequence, 829 residues long: Receptor-type tyrosine-protein phosphatase alpha (829 aa).

A signal peptide spans 1 to 19; it reads MDSWFILVLFGSGLIHVSA. Residues 20–142 are Extracellular-facing; it reads NNATTVSPSL…ETFPPADETP (123 aa). N21, N47, N51, N68, N80, N86, N104, and N124 each carry an N-linked (GlcNAc...) asparagine glycan. The segment at 79-106 is disordered; it reads VNSSHSDNGTRRAASTESGGTTISPNGS. Residues 143-166 traverse the membrane as a helical segment; the sequence is IIAVMVALSSLLVIVFIIIVLYML. The Cytoplasmic segment spans residues 167–829; sequence RFKKYKQAGS…DAFSDYANFK (663 aa). Phosphoserine occurs at positions 202 and 204. Tyrosine-protein phosphatase domains lie at 232–528 and 560–818; these read FREE…LLEH and LEEE…VQEY. Substrate contacts are provided by residues D437, 469 to 475, and Q513; that span reads CSAGVGR. C469 acts as the Phosphocysteine intermediate in catalysis. C759 serves as the catalytic Phosphocysteine intermediate. Y825 carries the phosphotyrosine modification.

Belongs to the protein-tyrosine phosphatase family. Receptor class 4 subfamily. In terms of assembly, part of a complex comprised of PTPRA, BCAR1, BCAR3 (via SH2 domain), and SRC. Within the complex, interacts (when phosphorylated on Tyr-825) with BCAR3 (via SH2 domain). Interacts with GRB2. Integrin binding to extracellular matrix induces phosphorylation at Tyr-825 which induces PTPRA localization and recruitment of BCAR3, BCAR1 and CRK to focal adhesions. Widely expressed. Highest expression in brain and kidney.

It localises to the cell membrane. The protein localises to the cell junction. It is found in the focal adhesion. The catalysed reaction is O-phospho-L-tyrosyl-[protein] + H2O = L-tyrosyl-[protein] + phosphate. Functionally, tyrosine protein phosphatase which is involved in integrin-mediated focal adhesion formation. Following integrin engagement, specifically recruits BCAR3, BCAR1 and CRK to focal adhesions thereby promoting SRC-mediated phosphorylation of BRAC1 and the subsequent activation of PAK and small GTPase RAC1 and CDC42. The chain is Receptor-type tyrosine-protein phosphatase alpha (Ptpra) from Mus musculus (Mouse).